We begin with the raw amino-acid sequence, 475 residues long: RNA pseudouridine synthase 3, mitochondrial (475 aa).

The transit peptide at 1–15 (MLCRRRRVGAAVRWL) directs the protein to the mitochondrion. Residues 40–74 (RLGKPKPGPRPRQLLSLPPFPGGGDGDPLPGRKAA) form a disordered region. The S4 RNA-binding domain maps to 90 to 160 (ADVPQEVVQA…GEIKKRYETI (71 aa)). The active site involves Asp-230.

The protein belongs to the pseudouridine synthase RluA family.

Its subcellular location is the mitochondrion. It carries out the reaction a uridine in RNA = a pseudouridine in RNA. This is RNA pseudouridine synthase 3, mitochondrial from Oryza sativa subsp. japonica (Rice).